We begin with the raw amino-acid sequence, 140 residues long: 6,7-dimethyl-8-ribityllumazine synthase (140 aa).

5-amino-6-(D-ribitylamino)uracil is bound by residues Phe-11, 43–45 (SFD), and 67–69 (CVI). 72–73 (DT) contributes to the (2S)-2-hydroxy-3-oxobutyl phosphate binding site. His-75 (proton donor) is an active-site residue. Leu-100 provides a ligand contact to 5-amino-6-(D-ribitylamino)uracil. Arg-115 provides a ligand contact to (2S)-2-hydroxy-3-oxobutyl phosphate.

This sequence belongs to the DMRL synthase family. As to quaternary structure, forms an icosahedral capsid composed of 60 subunits, arranged as a dodecamer of pentamers.

The enzyme catalyses (2S)-2-hydroxy-3-oxobutyl phosphate + 5-amino-6-(D-ribitylamino)uracil = 6,7-dimethyl-8-(1-D-ribityl)lumazine + phosphate + 2 H2O + H(+). It participates in cofactor biosynthesis; riboflavin biosynthesis; riboflavin from 2-hydroxy-3-oxobutyl phosphate and 5-amino-6-(D-ribitylamino)uracil: step 1/2. Catalyzes the formation of 6,7-dimethyl-8-ribityllumazine by condensation of 5-amino-6-(D-ribitylamino)uracil with 3,4-dihydroxy-2-butanone 4-phosphate. This is the penultimate step in the biosynthesis of riboflavin. This chain is 6,7-dimethyl-8-ribityllumazine synthase, found in Methanococcus vannielii (strain ATCC 35089 / DSM 1224 / JCM 13029 / OCM 148 / SB).